Reading from the N-terminus, the 99-residue chain is Small integral membrane protein 14 (99 aa).

Residues 1–49 are Lumenal-facing; it reads MAEGGFDPCECVCSHEHAMRRLINLLRQSQSYCTDTECLQELPGPSSDN. A helical membrane pass occupies residues 50 to 70; the sequence is GISITMILMAWMVIAVILFLL. The Cytoplasmic segment spans residues 71 to 99; sequence RPPNLRGSNLTGKPASPHNGQDPPAPPVD. The tract at residues 78–99 is disordered; the sequence is SNLTGKPASPHNGQDPPAPPVD.

The protein localises to the endoplasmic reticulum membrane. This is Small integral membrane protein 14 (SMIM14) from Bos taurus (Bovine).